A 465-amino-acid chain; its full sequence is Amino-acid carrier protein AlsT (465 aa).

10 helical membrane passes run 20–40, 82–102, 142–162, 177–197, 208–228, 241–261, 296–316, 336–356, 382–402, and 405–425; these read LFYILIGLGLFFTIRFGFIQF, VALAIATGGPGAVFWMWVVAA, WLGIVFAILITVSFGLIFNAV, VNKIVVAIVLAVLTAFIIFGG, IVPVMAGIYILIALFVVITNI, NALGFEQVVGGGIGGIIVIGA, LGVFFDTFIICTSTAFIILLY, IGGWAPTFIAVAMFLFAFSSV, IAVIAMVVYGSLSGFQIVWDM, and LFMGIMALINLIVIALLSNVA.

This sequence belongs to the alanine or glycine:cation symporter (AGCS) (TC 2.A.25) family.

The protein localises to the cell membrane. This Bacillus subtilis (strain 168) protein is Amino-acid carrier protein AlsT (alsT).